The following is a 499-amino-acid chain: 2-isopropylmalate synthase (499 aa).

Positions 5-267 constitute a Pyruvate carboxyltransferase domain; sequence IKIFDTTLRD…ETGINLGEIA (263 aa). Positions 14, 202, 204, and 238 each coordinate Mn(2+). The segment at 391–499 is regulatory domain; sequence SVEVLHVISG…YLSALNRIRR (109 aa).

The protein belongs to the alpha-IPM synthase/homocitrate synthase family. LeuA type 1 subfamily. Mn(2+) serves as cofactor.

It localises to the cytoplasm. It catalyses the reaction 3-methyl-2-oxobutanoate + acetyl-CoA + H2O = (2S)-2-isopropylmalate + CoA + H(+). The protein operates within amino-acid biosynthesis; L-leucine biosynthesis; L-leucine from 3-methyl-2-oxobutanoate: step 1/4. Its function is as follows. Catalyzes the condensation of the acetyl group of acetyl-CoA with 3-methyl-2-oxobutanoate (2-ketoisovalerate) to form 3-carboxy-3-hydroxy-4-methylpentanoate (2-isopropylmalate). The sequence is that of 2-isopropylmalate synthase from Pyrococcus furiosus (strain ATCC 43587 / DSM 3638 / JCM 8422 / Vc1).